The chain runs to 256 residues: Enolase-phosphatase E1 (256 aa).

2 residues coordinate Mg(2+): Asp14 and Glu16. Residues 142–143 (SS) and Lys176 contribute to the substrate site. Residue Asp201 coordinates Mg(2+).

This sequence belongs to the HAD-like hydrolase superfamily. MasA/MtnC family. Monomer. It depends on Mg(2+) as a cofactor.

The protein resides in the cytoplasm. Its subcellular location is the nucleus. It catalyses the reaction 5-methylsulfanyl-2,3-dioxopentyl phosphate + H2O = 1,2-dihydroxy-5-(methylsulfanyl)pent-1-en-3-one + phosphate. It participates in amino-acid biosynthesis; L-methionine biosynthesis via salvage pathway; L-methionine from S-methyl-5-thio-alpha-D-ribose 1-phosphate: step 3/6. The protein operates within amino-acid biosynthesis; L-methionine biosynthesis via salvage pathway; L-methionine from S-methyl-5-thio-alpha-D-ribose 1-phosphate: step 4/6. In terms of biological role, bifunctional enzyme that catalyzes the enolization of 2,3-diketo-5-methylthiopentyl-1-phosphate (DK-MTP-1-P) into the intermediate 2-hydroxy-3-keto-5-methylthiopentenyl-1-phosphate (HK-MTPenyl-1-P), which is then dephosphorylated to form the acireductone 1,2-dihydroxy-3-keto-5-methylthiopentene (DHK-MTPene). The sequence is that of Enolase-phosphatase E1 from Drosophila melanogaster (Fruit fly).